The sequence spans 443 residues: ATP-dependent protease ATPase subunit HslU (443 aa).

Residues I18, 60–65 (GVGKTE), D256, E321, and R393 contribute to the ATP site.

Belongs to the ClpX chaperone family. HslU subfamily. A double ring-shaped homohexamer of HslV is capped on each side by a ring-shaped HslU homohexamer. The assembly of the HslU/HslV complex is dependent on binding of ATP.

The protein localises to the cytoplasm. Functionally, ATPase subunit of a proteasome-like degradation complex; this subunit has chaperone activity. The binding of ATP and its subsequent hydrolysis by HslU are essential for unfolding of protein substrates subsequently hydrolyzed by HslV. HslU recognizes the N-terminal part of its protein substrates and unfolds these before they are guided to HslV for hydrolysis. This chain is ATP-dependent protease ATPase subunit HslU, found in Escherichia fergusonii (strain ATCC 35469 / DSM 13698 / CCUG 18766 / IAM 14443 / JCM 21226 / LMG 7866 / NBRC 102419 / NCTC 12128 / CDC 0568-73).